The following is a 148-amino-acid chain: Small ribosomal subunit protein bS6 (148 aa).

Positions 96–148 (HEEGQSAMLTRRDDRRERDGDDRPRRREGGFDRGDRGDRGPRRPRDNEAGEGA) are disordered.

Belongs to the bacterial ribosomal protein bS6 family.

Its function is as follows. Binds together with bS18 to 16S ribosomal RNA. The chain is Small ribosomal subunit protein bS6 from Brucella abortus biovar 1 (strain 9-941).